Consider the following 204-residue polypeptide: Holliday junction branch migration complex subunit RuvA (204 aa).

Residues 1-64 form a domain I region; that stretch reads MIGRLQGILL…EDAHLLFGFS (64 aa). Positions 65–143 are domain II; sequence AKTDRTLFRE…GIKQPDFFVE (79 aa). Residues 144–155 form a flexible linker region; it reads SSHVGAVDPVTT. The tract at residues 156–204 is domain III; it reads SPEVPAEEAVAALMALGYKASDAEKMVKRIAKPHLTSEQLIREALKAAL.

Belongs to the RuvA family. In terms of assembly, homotetramer. Forms an RuvA(8)-RuvB(12)-Holliday junction (HJ) complex. HJ DNA is sandwiched between 2 RuvA tetramers; dsDNA enters through RuvA and exits via RuvB. An RuvB hexamer assembles on each DNA strand where it exits the tetramer. Each RuvB hexamer is contacted by two RuvA subunits (via domain III) on 2 adjacent RuvB subunits; this complex drives branch migration. In the full resolvosome a probable DNA-RuvA(4)-RuvB(12)-RuvC(2) complex forms which resolves the HJ.

It localises to the cytoplasm. In terms of biological role, the RuvA-RuvB-RuvC complex processes Holliday junction (HJ) DNA during genetic recombination and DNA repair, while the RuvA-RuvB complex plays an important role in the rescue of blocked DNA replication forks via replication fork reversal (RFR). RuvA specifically binds to HJ cruciform DNA, conferring on it an open structure. The RuvB hexamer acts as an ATP-dependent pump, pulling dsDNA into and through the RuvAB complex. HJ branch migration allows RuvC to scan DNA until it finds its consensus sequence, where it cleaves and resolves the cruciform DNA. The sequence is that of Holliday junction branch migration complex subunit RuvA from Mannheimia succiniciproducens (strain KCTC 0769BP / MBEL55E).